Consider the following 528-residue polypeptide: Negative elongation factor A (528 aa).

The HDAg domain maps to 89–248 (WVLMVADILK…TPIPPSRTLL (160 aa)). Residues 125–188 (REKVGECEAS…LQKSTETAQQ (64 aa)) form an NELF-C/D-binding region. Threonine 157 is modified (phosphothreonine). Positions 189 to 248 (LKRSAGVPFHAKGRGLLRKMDTTTPLKGIPKQAPFRSPTAPSVFSPTGNRTPIPPSRTLL) are RNAPII-binding. The segment at 215 to 245 (KGIPKQAPFRSPTAPSVFSPTGNRTPIPPSR) is disordered. Residues serine 225 and serine 233 each carry the phosphoserine modification. Residues 227-238 (TAPSVFSPTGNR) show a composition bias toward polar residues. A Phosphothreonine modification is found at threonine 277. The span at 320–341 (PSTSYLPSTPSVVPASSYIPSS) shows a compositional bias: low complexity. Residues 320–409 (PSTSYLPSTP…PPAVAPTTQT (90 aa)) are disordered. Position 363 is a phosphoserine (serine 363).

This sequence belongs to the NELF-A family. The NELF complex is composed of NELFA, NELFB, NELFCD (isoform NELF-C or isoform NELF-D) and NELFE; NELFA and NELFCD form a stable subcomplex that binds to the N-terminus of NELFB. In vitro, the NELFA:NELFCD subcomplex binds to ssDNA and ssRNA in a sequence- and structure-dependent manner. Interacts with the RNA polymerase II complex when it is not phosphorylated by P-TEFb. Ubiquitous. Expressed in heart, brain, placenta, liver, skeletal muscle, kidney and pancreas. Expressed at lower level in adult lung. Expressed in fetal brain, lung, liver and kidney.

It localises to the nucleus. Essential component of the NELF complex, a complex that negatively regulates the elongation of transcription by RNA polymerase II. The NELF complex, which acts via an association with the DSIF complex and causes transcriptional pausing, is counteracted by the P-TEFb kinase complex. In terms of biological role, (Microbial infection) The NELF complex is involved in HIV-1 latency possibly involving recruitment of PCF11 to paused RNA polymerase II. The sequence is that of Negative elongation factor A (NELFA) from Homo sapiens (Human).